Consider the following 546-residue polypeptide: Chaperonin GroEL (546 aa).

ATP contacts are provided by residues 30-33, Lys51, 87-91, Gly415, and Asp495; these read TLGP and DGTTT.

Belongs to the chaperonin (HSP60) family. In terms of assembly, forms a cylinder of 14 subunits composed of two heptameric rings stacked back-to-back. Interacts with the co-chaperonin GroES.

It is found in the cytoplasm. The catalysed reaction is ATP + H2O + a folded polypeptide = ADP + phosphate + an unfolded polypeptide.. Together with its co-chaperonin GroES, plays an essential role in assisting protein folding. The GroEL-GroES system forms a nano-cage that allows encapsulation of the non-native substrate proteins and provides a physical environment optimized to promote and accelerate protein folding. The chain is Chaperonin GroEL from Brucella anthropi (strain ATCC 49188 / DSM 6882 / CCUG 24695 / JCM 21032 / LMG 3331 / NBRC 15819 / NCTC 12168 / Alc 37) (Ochrobactrum anthropi).